Consider the following 600-residue polypeptide: Probable methyltransferase PMT7 (600 aa).

Topologically, residues 1-15 (MGGGYVLFGSARSGQ) are cytoplasmic. A helical; Signal-anchor for type II membrane protein transmembrane segment spans residues 16 to 36 (MIMVALVLMVGSFYAGSIFGN). The Lumenal segment spans residues 37 to 600 (NSPIYISQPS…FCRKKFWAIL (564 aa)). N-linked (GlcNAc...) asparagine glycosylation is found at N49, N98, N110, N157, N200, N204, N334, N447, and N484.

Belongs to the methyltransferase superfamily.

The protein resides in the golgi apparatus membrane. This chain is Probable methyltransferase PMT7, found in Arabidopsis thaliana (Mouse-ear cress).